Consider the following 382-residue polypeptide: RNA exonuclease 3 (382 aa).

The region spanning 223–369 (VLALDCEMAY…EDAIAAMDVV (147 aa)) is the Exonuclease domain.

Belongs to the REXO1/REXO3 family.

The protein localises to the cytoplasm. It is found in the nucleus. In terms of biological role, 3' to 5' exoribonuclease required for proper 3' end maturation of MRP RNA and of the U5L snRNA. This Eremothecium gossypii (strain ATCC 10895 / CBS 109.51 / FGSC 9923 / NRRL Y-1056) (Yeast) protein is RNA exonuclease 3 (REX3).